The sequence spans 354 residues: Probable cinnamyl alcohol dehydrogenase 1 (354 aa).

Zn(2+) is bound by residues Cys47, His69, Glu70, Cys100, Cys103, Cys106, Cys114, and Cys163. NADP(+) is bound by residues Thr167, 188–193 (GLGGLG), 211–216 (STSESK), Thr251, and 297–299 (SVT).

It belongs to the zinc-containing alcohol dehydrogenase family. As to quaternary structure, homodimer. Requires Zn(2+) as cofactor.

It catalyses the reaction (E)-cinnamyl alcohol + NADP(+) = (E)-cinnamaldehyde + NADPH + H(+). The catalysed reaction is (E)-coniferol + NADP(+) = (E)-coniferaldehyde + NADPH + H(+). The enzyme catalyses (E)-sinapyl alcohol + NADP(+) = (E)-sinapaldehyde + NADPH + H(+). It carries out the reaction (E)-4-coumaroyl alcohol + NADP(+) = (E)-4-coumaraldehyde + NADPH + H(+). It catalyses the reaction (E)-caffeyl alcohol + NADP(+) = (E)-caffeyl aldehyde + NADPH + H(+). The protein operates within aromatic compound metabolism; phenylpropanoid biosynthesis. Functionally, involved in lignin biosynthesis. Catalyzes the final step specific for the production of lignin monomers. Catalyzes the NADPH-dependent reduction of coniferaldehyde, 5-hydroxyconiferaldehyde, sinapaldehyde, 4-coumaraldehyde and caffeyl aldehyde to their respective alcohols. The polypeptide is Probable cinnamyl alcohol dehydrogenase 1 (Oryza sativa subsp. japonica (Rice)).